Consider the following 156-residue polypeptide: Ribosomally synthesized cyclic peptide victorin precursosr vicA1 (156 aa).

The signal sequence occupies residues 1-21 (MVRITALMSGSILLFALQALA). 7 consecutive propeptides follow at residues 22-36 (MPVE…AEKR), 43-55 (KRGE…EEKR), 62-74 (KRGE…EEKR), 81-93 (KRGE…EEKR), 100-112 (KRGE…EEKR), 119-131 (KRGE…EEKR), and 138-150 (KRGE…EEKR).

VicA1 is processed by several endopeptidases including kexin proteases as well as the cluster-specific peptidases vicP1 and vicP2 to produce 7 identical copies of the hexapeptide Gly-Leu-Lys-Leu-Ala-Phe, that are further modified to yield victorins. After being excised from the precursor peptide, the core peptides are cyclized and modified post-translationally by enzymes encoded within the gene cluster. The ustYa family protein vicYb is required for the formation of the macrocycle in victorin and the copper amine oxidases (CAOs) vicK1 and vicK2 are responsible for converting victorin to the active form by oxidizing the N-terminal glycyl residue in the peptides to glyoxylate. Relaxed substrate specificity of enzymes in the victorin biosynthetic pathway results in a metabolic grid that produces a set of analogs including victorinines B, C, E or HV-toxin M.

Its pathway is mycotoxin biosynthesis. In terms of biological role, ribosomally synthesized cyclic peptide victorin precursor, part of the gene cluster that mediates the biosynthesis of the secondary metabolite victorin, the molecular basis for Victoria blight of oats. The vicA1 translated product contains a 7-fold repeated peptide embedding the hexapeptide Gly-Leu-Lys-Leu-Ala-Phe, that is converted into the cyclic victorin. The polypeptide is Ribosomally synthesized cyclic peptide victorin precursosr vicA1 (Bipolaris victoriae (strain FI3) (Victoria blight of oats agent)).